A 308-amino-acid chain; its full sequence is Transaldolase (308 aa).

K125 functions as the Schiff-base intermediate with substrate in the catalytic mechanism.

Belongs to the transaldolase family. Type 1 subfamily. Homodimer.

Its subcellular location is the cytoplasm. The enzyme catalyses D-sedoheptulose 7-phosphate + D-glyceraldehyde 3-phosphate = D-erythrose 4-phosphate + beta-D-fructose 6-phosphate. The protein operates within carbohydrate degradation; pentose phosphate pathway; D-glyceraldehyde 3-phosphate and beta-D-fructose 6-phosphate from D-ribose 5-phosphate and D-xylulose 5-phosphate (non-oxidative stage): step 2/3. Functionally, transaldolase is important for the balance of metabolites in the pentose-phosphate pathway. This is Transaldolase from Pseudomonas putida (strain W619).